The following is a 572-amino-acid chain: DNA polymerase (572 aa).

The 3'-5' exonuclease and strand displacement activities stretch occupies residues M1–A222. Residues Y56 to F66 form an interaction with the primer terminal protein region. Residues D142 and D166 each coordinate Mg(2+). Residues Y223 to G226 are DNA-binding; Involved in the formation of a stable complex between TP and phi29 DNA polymerase. The interval F227 to K572 is initiation, polymerization and pyrophosphorolytic activities. Mg(2+) contacts are provided by D246 and V247. 5-methyl-UTP is bound by residues Y251, K368, and K380. Residues D453 and D455 each coordinate Mg(2+). Position 455 (D455) interacts with 5-methyl-UTP.

The protein belongs to the DNA polymerase type-B family. As to quaternary structure, interacts with the primer terminal protein; this interaction allows the initiation of TP-primed DNA replication at both viral DNA ends. Interacts with DNA. It depends on Mg(2+) as a cofactor.

It carries out the reaction DNA(n) + a 2'-deoxyribonucleoside 5'-triphosphate = DNA(n+1) + diphosphate. In terms of biological role, polymerase responsible for protein-primed viral DNA replication by strand displacement with high processivity and fidelity. To start replication, the DNA polymerase forms a heterodimer with a free primer terminal protein (TP), recognizes the replication origins at both 5' ends of the linear chromosome, and initiates replication using as primer the OH-group of Ser-232 of the TP. This polymerase possesses three enzymatic activities: DNA synthesis (polymerase), primer terminal protein (TP) deoxynucleotidylation, which is the formation of a covalent linkage (phosphoester) between the hydroxyl group of a specific serine residue in TP and 5'-dAMP, a reaction directed by the third T at the 3' end, and 3' to 5' exonuclease activity. Exonuclease activity has a proofreading purpose. Since the polymerase initiates the replication on the third thymine, the TP-dAMP initiation product translocates backwards to recover the template information of the 2 terminal nucleotide (sliding back-mechanism). The polypeptide is DNA polymerase (Bacillus phage Nf (Bacteriophage Nf)).